Here is a 206-residue protein sequence, read N- to C-terminus: Thymidylate kinase (206 aa).

ATP is bound at residue 14 to 21 (GGEGIGKS).

Belongs to the thymidylate kinase family.

It carries out the reaction dTMP + ATP = dTDP + ADP. Its function is as follows. Phosphorylation of dTMP to form dTDP in both de novo and salvage pathways of dTTP synthesis. In Rickettsia bellii (strain RML369-C), this protein is Thymidylate kinase.